Consider the following 638-residue polypeptide: LIM domain kinase 2 (638 aa).

LIM zinc-binding domains are found at residues 12-63 (CQGC…CHKD) and 72-124 (CHGC…CGKC). A PDZ domain is found at 152 to 239 (HISMPATTEG…TLQLLIEHDP (88 aa)). Positions 280–304 (RRRSLRRSNSISKSPGPSSPKEPLL) are disordered. A compositionally biased stretch (low complexity) spans 286–304 (RSNSISKSPGPSSPKEPLL). S293 and S298 each carry phosphoserine. Residues 331-608 (LIHGEVLGKG…DFFEALSLYL (278 aa)) form the Protein kinase domain. Residues 337-345 (LGKGFFGQA) and N360 contribute to the ATP site. The active site involves D451. Phosphothreonine; by ROCK1 and CDC42BP is present on T505.

This sequence belongs to the protein kinase superfamily. TKL Ser/Thr protein kinase family. As to quaternary structure, binds ROCK1 and MARF1. Interacts with NISCH. Post-translationally, phosphorylated on serine and/or threonine residues by ROCK1.

Its subcellular location is the cytoplasm. The protein localises to the cytoskeleton. It localises to the spindle. It is found in the microtubule organizing center. The protein resides in the centrosome. The catalysed reaction is L-seryl-[protein] + ATP = O-phospho-L-seryl-[protein] + ADP + H(+). It carries out the reaction L-threonyl-[protein] + ATP = O-phospho-L-threonyl-[protein] + ADP + H(+). Functionally, serine/threonine-protein kinase that plays an essential role in the regulation of actin filament dynamics. Acts downstream of several Rho family GTPase signal transduction pathways. Involved in astral microtubule organization and mitotic spindle orientation during early stages of mitosis by mediating phosphorylation of TPPP. Displays serine/threonine-specific phosphorylation of myelin basic protein and histone (MBP) in vitro. Suppresses ciliogenesis via multiple pathways; phosphorylation of CFL1, suppression of directional trafficking of ciliary vesicles to the ciliary base, and by facilitating YAP1 nuclear localization where it acts as a transcriptional corepressor of the TEAD4 target genes AURKA and PLK1. In Bos taurus (Bovine), this protein is LIM domain kinase 2 (LIMK2).